The primary structure comprises 348 residues: Oxygen-dependent coproporphyrinogen-III oxidase (348 aa).

Ser104 lines the substrate pocket. A divalent metal cation is bound by residues His108 and His118. The active-site Proton donor is the His118. 120–122 is a binding site for substrate; it reads NYR. The a divalent metal cation site is built by His152 and His182. Residues 272–307 are important for dimerization; the sequence is YAEFNLVWDRGTIFGLQTNGRTESILMSLPPLARWE.

The protein belongs to the aerobic coproporphyrinogen-III oxidase family. Homodimer. It depends on a divalent metal cation as a cofactor.

The protein resides in the cytoplasm. It catalyses the reaction coproporphyrinogen III + O2 + 2 H(+) = protoporphyrinogen IX + 2 CO2 + 2 H2O. It functions in the pathway porphyrin-containing compound metabolism; protoporphyrin-IX biosynthesis; protoporphyrinogen-IX from coproporphyrinogen-III (O2 route): step 1/1. Functionally, involved in the heme and chlorophyll biosynthesis. Catalyzes the aerobic oxidative decarboxylation of propionate groups of rings A and B of coproporphyrinogen-III to yield the vinyl groups in protoporphyrinogen-IX. This chain is Oxygen-dependent coproporphyrinogen-III oxidase, found in Prochlorococcus marinus (strain NATL1A).